The following is a 497-amino-acid chain: Cytochrome P450 71A18 (497 aa).

A helical membrane pass occupies residues 4–24 (TLMVSLCLTTLLTLLLLKKFL). Cys439 contributes to the heme binding site.

This sequence belongs to the cytochrome P450 family. Heme is required as a cofactor.

The protein localises to the membrane. This chain is Cytochrome P450 71A18 (CYP71A18), found in Arabidopsis thaliana (Mouse-ear cress).